Here is a 762-residue protein sequence, read N- to C-terminus: 1-phosphatidylinositol 4,5-bisphosphate phosphodiesterase delta-4 (762 aa).

A PH domain is found at 16–124 (LLMQEGMPMR…WMRGLQLLVD (109 aa)). The interval 26-53 (KVRSKSWKKLRYFRLQNDGMTVWHARQA) is substrate binding. 3 consecutive EF-hand domains span residues 134 to 169 (RLDQ…MNVE), 170 to 205 (MDQE…LTKR), and 206 to 237 (AEVQ…EQKE). Ca(2+)-binding residues include Asp-147, Asn-149, Asp-151, Lys-153, Glu-158, Asp-183, Ser-185, Ser-187, Thr-189, and Glu-194. The short motif at 213 to 243 (ESFSADGQKLTLLEFLDFLREEQKERDCTSE) is the GBA element. In terms of domain architecture, PI-PLC X-box spans 290–435 (QDMTQPLNHY…LRRRILVKGK (146 aa)). His-305 is a catalytic residue. The Ca(2+) site is built by Asn-306, Glu-335, and Asp-337. His-350 is a catalytic residue. Ca(2+) is bound at residue Glu-384. 2 residues coordinate substrate: Lys-433 and Lys-435. Positions 443–471 (LEYEEEEAEPELEESELALESQFETEPEP) are enriched in acidic residues. Positions 443–483 (LEYEEEEAEPELEESELALESQFETEPEPQEQNLQSKDKKK) are disordered. Ser-457 carries the phosphoserine modification. Residues 493–609 (LSSLVIYLKS…GYVLKPDFLR (117 aa)) enclose the PI-PLC Y-box domain. Substrate contacts are provided by Ser-522 and Arg-549. In terms of domain architecture, C2 spans 609-736 (RDIQSSFHPE…QGYRHIHLLS (128 aa)). 6 residues coordinate Ca(2+): Ile-650, Asp-652, Asn-676, Asp-705, Tyr-706, and Asp-707. Positions 731 to 734 (HIHL) match the PDZ-binding motif.

In terms of assembly, interacts with GRIP1. Interacts (via GBA motif) with guanine nucleotide-binding protein G(i) alpha subunit GNAI3 (inactive GDP-bound form); low-affinity interaction. It depends on Ca(2+) as a cofactor.

It is found in the membrane. The protein resides in the nucleus. It localises to the cytoplasm. The protein localises to the endoplasmic reticulum. The enzyme catalyses a 1,2-diacyl-sn-glycero-3-phospho-(1D-myo-inositol-4,5-bisphosphate) + H2O = 1D-myo-inositol 1,4,5-trisphosphate + a 1,2-diacyl-sn-glycerol + H(+). The catalysed reaction is a 1,2-diacyl-sn-glycero-3-phospho-(1D-myo-inositol) + H2O = 1D-myo-inositol 1-phosphate + a 1,2-diacyl-sn-glycerol + H(+). In terms of biological role, hydrolyzes the phosphatidylinositol 4,5-bisphosphate (PIP2) to generate 2 second messenger molecules diacylglycerol (DAG) and inositol 1,4,5-trisphosphate (IP3). DAG mediates the activation of protein kinase C (PKC), while IP3 releases Ca(2+) from intracellular stores. Required for acrosome reaction in sperm during fertilization, probably by acting as an important enzyme for intracellular Ca(2+) mobilization in the zona pellucida-induced acrosome reaction. May play a role in cell growth. Modulates the liver regeneration in cooperation with nuclear PKC. Overexpression up-regulates the Erk signaling pathway and proliferation. This Pongo abelii (Sumatran orangutan) protein is 1-phosphatidylinositol 4,5-bisphosphate phosphodiesterase delta-4 (PLCD4).